Reading from the N-terminus, the 86-residue chain is Venom metalloproteinase (86 aa).

A Ca(2+)-binding site is contributed by aspartate 7. Position 67 (histidine 67) interacts with Zn(2+). Glutamate 68 is a catalytic residue. Residues histidine 71 and histidine 77 each contribute to the Zn(2+) site.

The protein belongs to the venom metalloproteinase (M12B) family. It depends on Zn(2+) as a cofactor. In terms of tissue distribution, expressed by the venom gland.

Its subcellular location is the secreted. The polypeptide is Venom metalloproteinase (Tityus serrulatus (Brazilian scorpion)).